A 362-amino-acid chain; its full sequence is 3-dehydroquinate synthase (362 aa).

Residues 73 to 78 (DAEAGK), 107 to 111 (GAATD), 131 to 132 (TT), lysine 144, lysine 153, and 171 to 174 (TLQT) each bind NAD(+). Zn(2+)-binding residues include glutamate 186, histidine 249, and histidine 265.

Belongs to the sugar phosphate cyclases superfamily. Dehydroquinate synthase family. It depends on NAD(+) as a cofactor. Requires Co(2+) as cofactor. Zn(2+) is required as a cofactor.

The protein localises to the cytoplasm. It catalyses the reaction 7-phospho-2-dehydro-3-deoxy-D-arabino-heptonate = 3-dehydroquinate + phosphate. Its pathway is metabolic intermediate biosynthesis; chorismate biosynthesis; chorismate from D-erythrose 4-phosphate and phosphoenolpyruvate: step 2/7. Catalyzes the conversion of 3-deoxy-D-arabino-heptulosonate 7-phosphate (DAHP) to dehydroquinate (DHQ). The polypeptide is 3-dehydroquinate synthase (Mycobacterium bovis (strain ATCC BAA-935 / AF2122/97)).